Consider the following 218-residue polypeptide: Claudin-5 (218 aa).

The Cytoplasmic portion of the chain corresponds to 1 to 7 (MGSAALE). The chain crosses the membrane as a helical span at residues 8–28 (ILGLVLCLVGWGGLILACGLP). Residues 29–81 (MWQVTAFLDHNIVTAQTTWKGLWMSCVVQSTGHMQCKVYDSVLALSTEVQAAR) are Extracellular-facing. A helical membrane pass occupies residues 82-102 (ALTVSAVLLAFVALFVTLAGA). The Cytoplasmic portion of the chain corresponds to 103 to 122 (QCTTCVAPGPAKARVALTGG). A helical membrane pass occupies residues 123-143 (VLYLFCGLLALVPLCWFANIV). The Extracellular segment spans residues 144–159 (VREFYDPSVPVSQKYE). Residues 160-180 (LGAALYIGWAATALLMVGGCL) traverse the membrane as a helical segment. Residues 181-218 (LCCGAWVCTGRPDLSFPVKYSAPRRPTATGDYDKKNYV) lie on the Cytoplasmic side of the membrane. The interval 217–218 (YV) is interactions with TJP1, TJP2 and TJP3.

It belongs to the claudin family. As to quaternary structure, directly interacts with TJP1/ZO-1, TJP2/ZO-2 and TJP3/ZO-3. Interacts with MPDZ.

Its subcellular location is the cell junction. The protein resides in the tight junction. It is found in the cell membrane. In terms of biological role, plays a major role in tight junction-specific obliteration of the intercellular space. In Homo sapiens (Human), this protein is Claudin-5 (CLDN5).